The primary structure comprises 455 residues: Serine--tRNA ligase (455 aa).

252–254 (TSE) provides a ligand contact to L-serine. ATP-binding positions include 283 to 285 (RKE) and V299. Residue E306 coordinates L-serine. 370–373 (EVVS) provides a ligand contact to ATP. T406 contributes to the L-serine binding site.

This sequence belongs to the class-II aminoacyl-tRNA synthetase family. Type-1 seryl-tRNA synthetase subfamily. Homodimer. The tRNA molecule binds across the dimer.

Its subcellular location is the cytoplasm. It carries out the reaction tRNA(Ser) + L-serine + ATP = L-seryl-tRNA(Ser) + AMP + diphosphate + H(+). It catalyses the reaction tRNA(Sec) + L-serine + ATP = L-seryl-tRNA(Sec) + AMP + diphosphate + H(+). It participates in aminoacyl-tRNA biosynthesis; selenocysteinyl-tRNA(Sec) biosynthesis; L-seryl-tRNA(Sec) from L-serine and tRNA(Sec): step 1/1. Its function is as follows. Catalyzes the attachment of serine to tRNA(Ser). Is also able to aminoacylate tRNA(Sec) with serine, to form the misacylated tRNA L-seryl-tRNA(Sec), which will be further converted into selenocysteinyl-tRNA(Sec). This is Serine--tRNA ligase from Thermococcus sibiricus (strain DSM 12597 / MM 739).